A 488-amino-acid chain; its full sequence is Annexin A7 (488 aa).

The span at Met-1–Pro-18 shows a compositional bias: pro residues. Disordered regions lie at residues Met-1–Val-49 and Gly-71–Ser-150. Positions Met-1–Pro-143 are repeat-rich region. The 3 X 5 AA tandem repeats of G-Y-P-P-X stretch occupies residues Gly-5 to Ala-20. Gly residues predominate over residues Pro-89–Phe-102. Annexin repeat units follow at residues Phe-185–Met-256, Pro-257–Gln-328, Gln-340–Gln-412, and Asn-416–Gly-487. Residue Lys-233 is modified to N6-acetyllysine.

The protein belongs to the annexin family. In terms of assembly, interacts with PDCD6.

Functionally, calcium/phospholipid-binding protein which promotes membrane fusion and is involved in exocytosis. The protein is Annexin A7 (ANXA7) of Macaca fascicularis (Crab-eating macaque).